The primary structure comprises 705 residues: UvrABC system protein C (705 aa).

Positions 16-95 constitute a GIY-YIG domain; sequence ETPGVYRFRD…IKQFDPRFNV (80 aa). The UVR domain maps to 208 to 243; that stretch reads GRYLRRLEREMQQAAQAQEYERAARLRDDIGALRRA. A compositionally biased stretch (low complexity) spans 315–332; it reads AASTGTAGSTVPTTTAGS. 2 disordered regions span residues 315-335 and 683-705; these read AASTGTAGSTVPTTTAGSQGE and RADAPAPVVDPRTGEILDTETVS.

Belongs to the UvrC family. In terms of assembly, interacts with UvrB in an incision complex.

It is found in the cytoplasm. The UvrABC repair system catalyzes the recognition and processing of DNA lesions. UvrC both incises the 5' and 3' sides of the lesion. The N-terminal half is responsible for the 3' incision and the C-terminal half is responsible for the 5' incision. This chain is UvrABC system protein C, found in Frankia casuarinae (strain DSM 45818 / CECT 9043 / HFP020203 / CcI3).